A 141-amino-acid chain; its full sequence is Granulocyte-macrophage colony-stimulating factor (141 aa).

The first 17 residues, 1–17 (MWLQNLLFLGIVVYSLS), serve as a signal peptide directing secretion. Residue S22 is glycosylated (O-linked (GalNAc...) serine). T27 is a glycosylation site (O-linked (GalNAc...) threonine). 2 disulfide bridges follow: C68–C110 and C102–C135. N-linked (GlcNAc...) asparagine glycosylation is found at N83 and N92.

The protein belongs to the GM-CSF family. Monomer. The signaling GM-CSF receptor complex is a dodecamer of two head-to-head hexamers of two alpha, two beta, and two ligand subunits.

The protein localises to the secreted. In terms of biological role, cytokine that stimulates the growth and differentiation of hematopoietic precursor cells from various lineages, including granulocytes, macrophages, eosinophils and erythrocytes. This is Granulocyte-macrophage colony-stimulating factor (Csf2) from Mus musculus (Mouse).